Reading from the N-terminus, the 102-residue chain is Small ribosomal subunit protein uS10 (102 aa).

It belongs to the universal ribosomal protein uS10 family. Part of the 30S ribosomal subunit.

Its function is as follows. Involved in the binding of tRNA to the ribosomes. In Streptococcus uberis (strain ATCC BAA-854 / 0140J), this protein is Small ribosomal subunit protein uS10.